Consider the following 351-residue polypeptide: Leukotriene B4 receptor 1 (351 aa).

The Extracellular portion of the chain corresponds to 1 to 21 (MAANTTSPAAPSSPGGMSLSL). Asn4 carries N-linked (GlcNAc...) asparagine glycosylation. A helical membrane pass occupies residues 22-44 (LPIVLLSVALAVGLPGNSFVVWS). The Cytoplasmic portion of the chain corresponds to 45-56 (ILKRMQKRTVTA). Residues 57-77 (LLVLNLALADLAVLLTAPFFL) form a helical membrane-spanning segment. Residues 78–93 (HFLARGTWSFREMGCR) lie on the Extracellular side of the membrane. Residues 94–115 (LCHYVCGISMYASVLLITIMSL) form a helical membrane-spanning segment. Residues 116-140 (DRSLAVARPFMSQKVRTKAFARWVL) are Cytoplasmic-facing. Residues 141-161 (AGIWVVSFLLAIPVLVYRTVK) traverse the membrane as a helical segment. At 162–179 (WNNRTLICAPNYPNKEHK) the chain is on the extracellular side. Asn164 carries an N-linked (GlcNAc...) asparagine glycan. The helical transmembrane segment at 180 to 200 (VFHLLFEAITGFLLPFLAVVA) threads the bilayer. The Cytoplasmic portion of the chain corresponds to 201-222 (SYSDIGRRLQARRFRRSRRTGR). Residues 223–243 (LVVLIILAFAAFWLPYHLVNL) traverse the membrane as a helical segment. At 244 to 268 (VEAGRTVAGWDKNSPAGQRLRLARY) the chain is on the extracellular side. The helical transmembrane segment at 269-289 (VLIALAFLSSSVNPVLYACAG) threads the bilayer. Topologically, residues 290–351 (GGLLRSAGVG…TSSTIPESSK (62 aa)) are cytoplasmic. Composition is skewed to polar residues over residues 311-326 (EVSS…QTPK) and 339-351 (SFMT…ESSK). The tract at residues 311–351 (EVSSTRRGGTLVQTPKDTPACPEPGPTDSFMTSSTIPESSK) is disordered.

This sequence belongs to the G-protein coupled receptor 1 family. Phosphorylated by GRK6 upon leukotriene B4 binding; which promotes desensitization. As to expression, highly expressed on activated leukocytes, including eosinophils.

It is found in the cell membrane. In terms of biological role, receptor for leukotriene B4, a potent chemoattractant involved in inflammation and immune response. The chain is Leukotriene B4 receptor 1 (Ltb4r) from Mus musculus (Mouse).